The chain runs to 292 residues: MIELRQLSKAIDGNQVLKDVSLTIEKGEIFGLLGRNGSGKTTMLRLIQQIIFADSGTILFDGVEIKKHPKVKQNIIYMPVQNPFYDKYTYKQLVDILRRIYPKFDVTYANELMNRYEIPETKKYRELSTGLKKQLSLVLSFAARPALILLDEPTDGIDAVTRHDVLQLMVDEVAERDTSILITSHRLEDIERMCNRIGFLEDNSLTNVMDLDELKEEYIKIQMAFDTDVNLAIREQNIPMLDQAGVFYTVLIPKSDEEKKSFLRELKPKVWNELPVNLEEVFIAKFGGKRRW.

In terms of domain architecture, ABC transporter spans 2–227 (IELRQLSKAI…YIKIQMAFDT (226 aa)). Position 34–41 (34–41 (GRNGSGKT)) interacts with ATP.

Belongs to the ABC transporter superfamily. In terms of assembly, the complex is composed of 2 ATP-binding proteins (YtrB and YtrE), 2 transmembrane proteins (YtrC and YtrD) and a solute-binding protein (YtrF).

The protein resides in the cell membrane. Its function is as follows. Part of the ABC transporter complex YtrBCDEF that plays a role in acetoin utilization during stationary phase and sporulation. The polypeptide is ABC transporter ATP-binding protein YtrB (ytrB) (Bacillus subtilis (strain 168)).